Here is a 128-residue protein sequence, read N- to C-terminus: Small ribosomal subunit protein uS11 (128 aa).

It belongs to the universal ribosomal protein uS11 family. As to quaternary structure, part of the 30S ribosomal subunit. Interacts with proteins S7 and S18. Binds to IF-3.

Located on the platform of the 30S subunit, it bridges several disparate RNA helices of the 16S rRNA. Forms part of the Shine-Dalgarno cleft in the 70S ribosome. In Porphyromonas gingivalis (strain ATCC BAA-308 / W83), this protein is Small ribosomal subunit protein uS11.